The sequence spans 103 residues: ATP synthase F(0) complex subunit g, mitochondrial (103 aa).

Ala-2 bears the N-acetylalanine mark. N6-acetyllysine occurs at positions 11, 24, and 54.

This sequence belongs to the ATPase g subunit family. In terms of assembly, component of the ATP synthase complex composed at least of ATP5F1A/subunit alpha, ATP5F1B/subunit beta, ATP5MC1/subunit c (homooctomer), MT-ATP6/subunit a, MT-ATP8/subunit 8, ATP5ME/subunit e, ATP5MF/subunit f, ATP5MG/subunit g, ATP5MK/subunit k, ATP5MJ/subunit j, ATP5F1C/subunit gamma, ATP5F1D/subunit delta, ATP5F1E/subunit epsilon, ATP5PF/subunit F6, ATP5PB/subunit b, ATP5PD/subunit d, ATP5PO/subunit OSCP. ATP synthase complex consists of a soluble F(1) head domain (subunits alpha(3) and beta(3)) - the catalytic core - and a membrane F(0) domain - the membrane proton channel (subunits c, a, 8, e, f, g, k and j). These two domains are linked by a central stalk (subunits gamma, delta, and epsilon) rotating inside the F1 region and a stationary peripheral stalk (subunits F6, b, d, and OSCP).

The protein localises to the mitochondrion. It localises to the mitochondrion inner membrane. Subunit g, of the mitochondrial membrane ATP synthase complex (F(1)F(0) ATP synthase or Complex V) that produces ATP from ADP in the presence of a proton gradient across the membrane which is generated by electron transport complexes of the respiratory chain. ATP synthase complex consist of a soluble F(1) head domain - the catalytic core - and a membrane F(1) domain - the membrane proton channel. These two domains are linked by a central stalk rotating inside the F(1) region and a stationary peripheral stalk. During catalysis, ATP synthesis in the catalytic domain of F(1) is coupled via a rotary mechanism of the central stalk subunits to proton translocation. In vivo, can only synthesize ATP although its ATP hydrolase activity can be activated artificially in vitro. Part of the complex F(0) domain. The chain is ATP synthase F(0) complex subunit g, mitochondrial from Rattus norvegicus (Rat).